The chain runs to 283 residues: Small ribosomal subunit protein uS2B (283 aa).

Residues 254–283 (GQVGQSAWDEEGDWNTTGAAQTSDWANTVA) form a disordered region. Polar residues predominate over residues 267–283 (WNTTGAAQTSDWANTVA).

It belongs to the universal ribosomal protein uS2 family. Component of the small ribosomal subunit. Mature ribosomes consist of a small (40S) and a large (60S) subunit. The 40S subunit contains about 33 different proteins and 1 molecule of RNA (18S). The 60S subunit contains about 49 different proteins and 3 molecules of RNA (25S, 5.8S and 5S). Interacts with rps21.

Its subcellular location is the cytoplasm. In terms of biological role, required for the assembly and/or stability of the 40S ribosomal subunit. Required for the processing of the 20S rRNA-precursor to mature 18S rRNA in a late step of the maturation of 40S ribosomal subunits. The polypeptide is Small ribosomal subunit protein uS2B (rps0b) (Schizosaccharomyces japonicus (strain yFS275 / FY16936) (Fission yeast)).